We begin with the raw amino-acid sequence, 840 residues long: Exocyst complex component 7 (840 aa).

The interval 1 to 112 is disordered; it reads MSAPPRLSAR…ATSTTSPFSY (112 aa). A compositionally biased stretch (polar residues) spans 19-31; it reads SNAPSPTSPTGLK. 2 stretches are compositionally biased toward low complexity: residues 50 to 73 and 83 to 111; these read KSSV…TLPK and QQQQ…SPFS. Residues 193–227 are a coiled coil; the sequence is KNNATSELTEQDDQLENDKRDLQFIKEQLEKNNSM. The tract at residues 601–638 is disordered; sequence QDNNNSNSNSNAPSSTSSNSKSSSSSSSSSSSNSASST. Residues 603–637 are compositionally biased toward low complexity; it reads NNNSNSNSNAPSSTSSNSKSSSSSSSSSSSNSASS.

This sequence belongs to the EXO70 family. As to quaternary structure, the exocyst complex is composed of sec3/exoc1, sec5/exoc2, sec6/exoc3, sec8/exoc4, sec10/exoc5, sec15/exoc6, exo70/exoc7 and exo84/exoc8.

Its subcellular location is the cytoplasm. It localises to the cytosol. It is found in the cell membrane. The protein localises to the midbody. The protein resides in the midbody ring. In terms of biological role, component of the exocyst complex involved in the docking of exocytic vesicles with fusion sites on the plasma membrane. The polypeptide is Exocyst complex component 7 (exoc7) (Dictyostelium discoideum (Social amoeba)).